The chain runs to 396 residues: Cytochrome c biogenesis protein Ccs1 (396 aa).

Transmembrane regions (helical) follow at residues 22-42, 79-99, and 162-182; these read LKFSITLFIIICIVSAIGTII, SNFYLILLLCLSFSLFFCSLK, and AGPLLIHLSLILILLGSAIHA.

This sequence belongs to the Ccs1/CcsB family. May interact with CcsA.

Its subcellular location is the plastid. The protein localises to the chloroplast thylakoid membrane. Its function is as follows. Required during biogenesis of c-type cytochromes (cytochrome c6 and cytochrome f) at the step of heme attachment. The sequence is that of Cytochrome c biogenesis protein Ccs1 from Cyanidium caldarium (Red alga).